Here is a 362-residue protein sequence, read N- to C-terminus: 5'-tyrosyl-DNA phosphodiesterase (362 aa).

Residues Met-1–Glu-10 are compositionally biased toward acidic residues. The segment at Met-1–Met-43 is disordered. A compositionally biased stretch (basic and acidic residues) spans Ile-11–Gln-20. A compositionally biased stretch (acidic residues) spans Glu-21–Pro-33. The segment at Asn-126–Leu-130 is interaction with 5' end of substrate DNA. 2 residues coordinate Mg(2+): Asp-128 and Glu-158. The tract at residues His-232–Arg-237 is interaction with 5' end of substrate DNA. The active-site Proton donor/acceptor is the Asp-271. Positions Asn-273–Arg-275 are interaction with 5' end of substrate DNA.

Belongs to the CCR4/nocturin family. TTRAP/TDP2 subfamily. In terms of assembly, interacts with mxl-1; the interaction promotes axon regeneration after injury. Interacts with ets-4; the interaction is required for the sumoylation of ets-4. The cofactor is Mg(2+). It depends on Mn(2+) as a cofactor.

The protein localises to the nucleus. It is found in the PML body. DNA repair enzyme that can remove a variety of covalent adducts from DNA through hydrolysis of a 5'-phosphodiester bond, giving rise to DNA with a free 5' phosphate. Catalyzes the hydrolysis of dead-end complexes between DNA and the topoisomerase 2 (top2) active site tyrosine residue. Hydrolyzes 5'-phosphoglycolates on protruding 5' ends on DNA double-strand breaks (DSBs) due to DNA damage by radiation and free radicals. Inhibits axon regeneration after neuronal injury by promoting the sumoylation of ets-4, thereby inhibiting the phosphorylation of ets-4 required for probable interaction with cebp-1 and activation of svh-2 expression. The sequence is that of 5'-tyrosyl-DNA phosphodiesterase from Caenorhabditis elegans.